A 286-amino-acid polypeptide reads, in one-letter code: Homoserine kinase (286 aa).

Position 78-88 (78-88 (PLARGLGSSSS)) interacts with ATP.

Belongs to the GHMP kinase family. Homoserine kinase subfamily.

It is found in the cytoplasm. It carries out the reaction L-homoserine + ATP = O-phospho-L-homoserine + ADP + H(+). Its pathway is amino-acid biosynthesis; L-threonine biosynthesis; L-threonine from L-aspartate: step 4/5. Catalyzes the ATP-dependent phosphorylation of L-homoserine to L-homoserine phosphate. This is Homoserine kinase from Streptococcus thermophilus (strain CNRZ 1066).